A 267-amino-acid chain; its full sequence is Glutamate 5-kinase (267 aa).

Residue lysine 14 participates in ATP binding. The substrate site is built by serine 54, aspartate 141, and asparagine 157. ATP-binding positions include 177-178 and 219-225; these read SD and TGGMMSK.

The protein belongs to the glutamate 5-kinase family.

It is found in the cytoplasm. It carries out the reaction L-glutamate + ATP = L-glutamyl 5-phosphate + ADP. It participates in amino-acid biosynthesis; L-proline biosynthesis; L-glutamate 5-semialdehyde from L-glutamate: step 1/2. Catalyzes the transfer of a phosphate group to glutamate to form L-glutamate 5-phosphate. The chain is Glutamate 5-kinase from Streptococcus thermophilus (strain CNRZ 1066).